We begin with the raw amino-acid sequence, 259 residues long: Ribonuclease PH (259 aa).

Phosphate-binding positions include Arg88 and Gly126–Arg128.

Belongs to the RNase PH family. As to quaternary structure, homohexameric ring arranged as a trimer of dimers.

The catalysed reaction is tRNA(n+1) + phosphate = tRNA(n) + a ribonucleoside 5'-diphosphate. Phosphorolytic 3'-5' exoribonuclease that plays an important role in tRNA 3'-end maturation. Removes nucleotide residues following the 3'-CCA terminus of tRNAs; can also add nucleotides to the ends of RNA molecules by using nucleoside diphosphates as substrates, but this may not be physiologically important. Probably plays a role in initiation of 16S rRNA degradation (leading to ribosome degradation) during starvation. This chain is Ribonuclease PH, found in Mycobacterium bovis (strain ATCC BAA-935 / AF2122/97).